The chain runs to 577 residues: Protein downstream neighbor of son homolog (577 aa).

Disordered stretches follow at residues 1 to 67 (MAEL…KRRN) and 328 to 382 (FTQP…LEEM). Positions 362 to 375 (ETDEVSDESDEDES) are enriched in acidic residues.

The protein belongs to the DONSON family. As to quaternary structure, component of the replisome complex.

It localises to the nucleus. Replisome component that maintains genome stability by protecting stalled or damaged replication forks. After the induction of replication stress, required for the stabilization of stalled replication forks, the efficient activation of the intra-S-phase and G/2M cell-cycle checkpoints and the maintenance of genome stability. This is Protein downstream neighbor of son homolog from Xenopus tropicalis (Western clawed frog).